Reading from the N-terminus, the 183-residue chain is MTSQIRQNYSTEVEAAVNRLVNLHLRASYTYLSLGFFFDRDDVALEGVGHFFRELAEEKREGAERLLEFQNDRGGRALFQDVQKPSQDEWGKTQEAMEAALAMEKNLNQALLDLHALGSARTDPHLCDFLESHYLDKEVKLIKKMGNHLTNLRRVAGPQPAQTGAPQGSLGEYLFERLTLKHD.

A Ferritin-like diiron domain is found at 7 to 156; sequence QNYSTEVEAA…NHLTNLRRVA (150 aa). The Fe cation site is built by glutamate 54, glutamate 57, glutamate 58, glutamate 61, and glutamate 64.

It belongs to the ferritin family. In terms of assembly, oligomer of 24 subunits. There are two types of subunits: L (light) chain and H (heavy) chain. The major chain can be light or heavy, depending on the species and tissue type. The functional molecule forms a roughly spherical shell with a diameter of 12 nm and contains a central cavity into which the insoluble mineral iron core is deposited. Interacts with NCOA4.

It localises to the cytoplasm. It is found in the cytoplasmic vesicle. The protein resides in the autophagosome. The protein localises to the autolysosome. Functionally, stores iron in a soluble, non-toxic, readily available form. Important for iron homeostasis. Iron is taken up in the ferrous form and deposited as ferric hydroxides after oxidation. Also plays a role in delivery of iron to cells. Mediates iron uptake in capsule cells of the developing kidney. Degraded to release iron upon autophagy activation by nutrient starvation. The chain is Ferritin light chain 1 (Ftl1) from Mus musculus (Mouse).